The chain runs to 499 residues: Aspartyl/glutamyl-tRNA(Asn/Gln) amidotransferase subunit B (499 aa).

The protein belongs to the GatB/GatE family. GatB subfamily. In terms of assembly, heterotrimer of A, B and C subunits.

It carries out the reaction L-glutamyl-tRNA(Gln) + L-glutamine + ATP + H2O = L-glutaminyl-tRNA(Gln) + L-glutamate + ADP + phosphate + H(+). The enzyme catalyses L-aspartyl-tRNA(Asn) + L-glutamine + ATP + H2O = L-asparaginyl-tRNA(Asn) + L-glutamate + ADP + phosphate + 2 H(+). Its function is as follows. Allows the formation of correctly charged Asn-tRNA(Asn) or Gln-tRNA(Gln) through the transamidation of misacylated Asp-tRNA(Asn) or Glu-tRNA(Gln) in organisms which lack either or both of asparaginyl-tRNA or glutaminyl-tRNA synthetases. The reaction takes place in the presence of glutamine and ATP through an activated phospho-Asp-tRNA(Asn) or phospho-Glu-tRNA(Gln). The polypeptide is Aspartyl/glutamyl-tRNA(Asn/Gln) amidotransferase subunit B (Mesorhizobium japonicum (strain LMG 29417 / CECT 9101 / MAFF 303099) (Mesorhizobium loti (strain MAFF 303099))).